The chain runs to 488 residues: Auxin transporter-like protein 1 (488 aa).

The segment at 1-36 is disordered; the sequence is MSGEKQAEESIVVSGEDEVAGRKVEDSAAEEDIDGN. Topologically, residues 1–64 are cytoplasmic; that stretch reads MSGEKQAEES…DAWFSCASNQ (64 aa). Residues 65 to 82 traverse the membrane as a helical segment; sequence VAQVLLTLPYSFSQLGML. Topologically, residues 83 to 84 are extracellular; it reads SG. Residues 85–105 traverse the membrane as a helical segment; sequence ILLQIFYGLMGSWTAYLISVL. The Cytoplasmic segment spans residues 106–141; sequence YVEYRARMEKQEAKSFKNHVIQWFEVLDGLLGPYWK. The chain crosses the membrane as a helical span at residues 142–162; the sequence is AAGLAFNCTFLLFGSVIQLIA. Residues 163 to 178 lie on the Extracellular side of the membrane; it reads CASNIYYINDRLDKRT. Residues 179–199 traverse the membrane as a helical segment; it reads WTYIFGACCATTVFIPSFHNY. The Cytoplasmic segment spans residues 200–202; sequence RIW. A helical membrane pass occupies residues 203–223; that stretch reads SFLGLGMTTYTAWYLTIASFL. Topologically, residues 224–238 are extracellular; it reads HGQAEGVTHSGPTKL. A helical membrane pass occupies residues 239 to 259; that stretch reads VLYFTGATNILYTFGGHAVTV. Topologically, residues 260 to 273 are cytoplasmic; the sequence is EIMHAMWKPRKFKS. A helical transmembrane segment spans residues 274 to 294; it reads IYLMATLYVFTLTLPSASAVY. Residues 295–320 are Extracellular-facing; that stretch reads WAFGDQLLNHSNAFSLLPKTRFRDTA. Residue asparagine 303 is glycosylated (N-linked (GlcNAc...) asparagine). A helical membrane pass occupies residues 321–341; it reads VILMLIHQFITFGFACTPLYF. The Cytoplasmic portion of the chain corresponds to 342–362; it reads VWEKAIGMHHTKSLCLRALVR. A helical transmembrane segment spans residues 363–383; sequence LPVVVPIWFLAIIFPFFGPIN. Residue serine 384 is a topological domain, extracellular. Residues 385–405 form a helical membrane-spanning segment; that stretch reads AVGALLVTFTVYIIPALAHML. Topologically, residues 406-427 are cytoplasmic; the sequence is TYRTASARRNAAEKPPFFIPSW. Residues 428–448 form a helical membrane-spanning segment; that stretch reads AGVYVINAFIVVWVLVLGFGF. Residues 449–488 lie on the Extracellular side of the membrane; the sequence is GGWASMTNFIRQIDTFGLFAKCYQCKPPPAPIAAGAHHRR.

The protein belongs to the amino acid/polyamine transporter 2 family. Amino acid/auxin permease (AAAP) (TC 2.A.18.1) subfamily.

It is found in the cell membrane. Carrier protein involved in proton-driven auxin influx. Mediates the formation of auxin gradient from developing leaves (site of auxin biosynthesis) to tips by contributing to the loading of auxin in vascular tissues and facilitating acropetal (base to tip) auxin transport within inner tissues of the root apex, and basipetal (tip to base) auxin transport within outer tissues of the root apex. The chain is Auxin transporter-like protein 1 (LAX1) from Arabidopsis thaliana (Mouse-ear cress).